Consider the following 258-residue polypeptide: Deoxyribose-phosphate aldolase (258 aa).

Asp102 acts as the Proton donor/acceptor in catalysis. Residue Lys165 is the Schiff-base intermediate with acetaldehyde of the active site. The active-site Proton donor/acceptor is Lys199.

The protein belongs to the DeoC/FbaB aldolase family. DeoC type 2 subfamily.

The protein localises to the cytoplasm. The catalysed reaction is 2-deoxy-D-ribose 5-phosphate = D-glyceraldehyde 3-phosphate + acetaldehyde. The protein operates within carbohydrate degradation; 2-deoxy-D-ribose 1-phosphate degradation; D-glyceraldehyde 3-phosphate and acetaldehyde from 2-deoxy-alpha-D-ribose 1-phosphate: step 2/2. Functionally, catalyzes a reversible aldol reaction between acetaldehyde and D-glyceraldehyde 3-phosphate to generate 2-deoxy-D-ribose 5-phosphate. The sequence is that of Deoxyribose-phosphate aldolase from Vibrio vulnificus (strain CMCP6).